Reading from the N-terminus, the 493-residue chain is Transmembrane protein 184 homolog DDB_G0284525 (493 aa).

Residues 1-10 (MTQESSSSNH) show a composition bias toward polar residues. The tract at residues 1-25 (MTQESSSSNHYVDESSFDNNNNNNN) is disordered. 7 consecutive transmembrane segments (helical) span residues 46–66 (VPALYAMFALASLFVLLATIL), 87–107 (IVRIVFMIPIYAIYSLLSLLL), 119–139 (DCYEAYVLYMFFALCVSYGGG), 180–200 (YVLVRPAVTLASAIFEIFGLY), 212–232 (FYNAFIINVSVTVALYIVVLF), 254–274 (IVVFFCFWQSIAISGMTNFGW), and 293–313 (FLICFEMFGVAILHQYAFPYE). 2 N-linked (GlcNAc...) asparagine glycosylation sites follow: Asn415 and Asn416.

The protein belongs to the TMEM184 family.

The protein resides in the cell membrane. Its function is as follows. Probable transporter. In Dictyostelium discoideum (Social amoeba), this protein is Transmembrane protein 184 homolog DDB_G0284525 (tmem184A).